We begin with the raw amino-acid sequence, 100 residues long: DNA-binding protein HU (100 aa).

Belongs to the bacterial histone-like protein family.

Histone-like DNA-binding protein which is capable of wrapping DNA to stabilize it, and thus to prevent its denaturation under extreme environmental conditions. The protein is DNA-binding protein HU (hup) of Synechocystis sp. (strain ATCC 27184 / PCC 6803 / Kazusa).